Consider the following 200-residue polypeptide: Holliday junction branch migration complex subunit RuvA (200 aa).

Residues 1-65 (MYEYIKGTLT…ETEHVLYGFS (65 aa)) are domain I. A domain II region spans residues 66 to 144 (SRAERECFRL…TLMPLYLEEP (79 aa)). A flexible linker region spans residues 145-149 (VVPSS). Residues 150–200 (TANSSFKEGIGALMNLGFSRLAADRMMTEAVKELSEEASVAELLPIALRKS) are domain III.

It belongs to the RuvA family. As to quaternary structure, homotetramer. Forms an RuvA(8)-RuvB(12)-Holliday junction (HJ) complex. HJ DNA is sandwiched between 2 RuvA tetramers; dsDNA enters through RuvA and exits via RuvB. An RuvB hexamer assembles on each DNA strand where it exits the tetramer. Each RuvB hexamer is contacted by two RuvA subunits (via domain III) on 2 adjacent RuvB subunits; this complex drives branch migration. In the full resolvosome a probable DNA-RuvA(4)-RuvB(12)-RuvC(2) complex forms which resolves the HJ.

It localises to the cytoplasm. In terms of biological role, the RuvA-RuvB-RuvC complex processes Holliday junction (HJ) DNA during genetic recombination and DNA repair, while the RuvA-RuvB complex plays an important role in the rescue of blocked DNA replication forks via replication fork reversal (RFR). RuvA specifically binds to HJ cruciform DNA, conferring on it an open structure. The RuvB hexamer acts as an ATP-dependent pump, pulling dsDNA into and through the RuvAB complex. HJ branch migration allows RuvC to scan DNA until it finds its consensus sequence, where it cleaves and resolves the cruciform DNA. In Chlamydia trachomatis serovar L2 (strain ATCC VR-902B / DSM 19102 / 434/Bu), this protein is Holliday junction branch migration complex subunit RuvA.